The primary structure comprises 404 residues: Serine/threonine transporter SstT (404 aa).

Transmembrane regions (helical) follow at residues I17–I37, F44–I64, I75–I95, A138–L158, I179–V199, L212–L232, I287–L307, F319–V339, and F354–I374.

Belongs to the dicarboxylate/amino acid:cation symporter (DAACS) (TC 2.A.23) family.

The protein localises to the cell membrane. It carries out the reaction L-serine(in) + Na(+)(in) = L-serine(out) + Na(+)(out). The enzyme catalyses L-threonine(in) + Na(+)(in) = L-threonine(out) + Na(+)(out). Functionally, involved in the import of serine and threonine into the cell, with the concomitant import of sodium (symport system). In Streptococcus equi subsp. zooepidemicus (strain MGCS10565), this protein is Serine/threonine transporter SstT.